Consider the following 210-residue polypeptide: Cytochrome c biogenesis ATP-binding export protein CcmA (210 aa).

One can recognise an ABC transporter domain in the interval 3-205 (LHLQAAGLAC…KPSGYRELNL (203 aa)). 37–44 (GPNGSGKT) provides a ligand contact to ATP.

It belongs to the ABC transporter superfamily. CcmA exporter (TC 3.A.1.107) family. In terms of assembly, the complex is composed of two ATP-binding proteins (CcmA) and two transmembrane proteins (CcmB).

It is found in the cell inner membrane. The enzyme catalyses heme b(in) + ATP + H2O = heme b(out) + ADP + phosphate + H(+). In terms of biological role, part of the ABC transporter complex CcmAB involved in the biogenesis of c-type cytochromes; once thought to export heme, this seems not to be the case, but its exact role is uncertain. Responsible for energy coupling to the transport system. The chain is Cytochrome c biogenesis ATP-binding export protein CcmA from Pseudomonas putida (strain GB-1).